Here is a 542-residue protein sequence, read N- to C-terminus: Plasminogen-binding protein PgbB (542 aa).

Residues 399 to 542 (KSASKKSQKG…RRKALEMNKK (144 aa)) are disordered. Composition is skewed to basic and acidic residues over residues 418–435 (QERH…ENKV) and 447–456 (VKTRRPEPIR). The segment covering 457–467 (DQNNATQQGET) has biased composition (polar residues). Residues 481-542 (NAAKKEVPKP…RRKALEMNKK (62 aa)) show a composition bias toward basic and acidic residues.

The protein resides in the cell surface. Its function is as follows. Binds plasminogen, specifically, and in a concentration and lysine-dependent manner. Plasminogen is the precursor of plasmin, a serine protease that cleaves fibrin, fibronectin, laminin and vitronectin. Acquisition of plasminogen/plasmin could enable H.pylori to degrade host components. The chain is Plasminogen-binding protein PgbB (pgbB) from Helicobacter pylori (strain ATCC 700392 / 26695) (Campylobacter pylori).